A 169-amino-acid polypeptide reads, in one-letter code: Cell division inhibitor SulA (169 aa).

The tract at residues 106-112 (ALRTGNY) is ftsZ binding. The segment at 162 to 169 (KIHSNLYH) is lon protease binding.

The protein belongs to the SulA family. As to quaternary structure, interacts with FtsZ. Is rapidly cleaved and degraded by the Lon protease once DNA damage is repaired.

Functionally, component of the SOS system and an inhibitor of cell division. Accumulation of SulA causes rapid cessation of cell division and the appearance of long, non-septate filaments. In the presence of GTP, binds a polymerization-competent form of FtsZ in a 1:1 ratio, thus inhibiting FtsZ polymerization and therefore preventing it from participating in the assembly of the Z ring. This mechanism prevents the premature segregation of damaged DNA to daughter cells during cell division. The protein is Cell division inhibitor SulA of Shigella boydii serotype 18 (strain CDC 3083-94 / BS512).